Here is a 333-residue protein sequence, read N- to C-terminus: Plasminogen (333 aa).

Residues cysteine 4–cysteine 83 enclose the Kringle 5 domain. Disulfide bonds link cysteine 4–cysteine 83, cysteine 25–cysteine 66, cysteine 54–cysteine 78, cysteine 90–cysteine 208, cysteine 100–cysteine 108, cysteine 130–cysteine 146, cysteine 222–cysteine 289, cysteine 252–cysteine 268, and cysteine 279–cysteine 307. One can recognise a Peptidase S1 domain in the interval valine 104–arginine 331. At serine 120 the chain carries Phosphoserine. Residues histidine 145 and aspartate 188 each act as charge relay system in the active site. Serine 283 acts as the Charge relay system in catalysis.

The protein belongs to the peptidase S1 family. Plasminogen subfamily. Interacts with CSPG4 and AMOT. Interacts (via the Kringle domains) with HRG; the interaction tethers PLG to the cell surface and enhances its activation. Interacts (via Kringle 4 domain) with ADA; the interaction stimulates PLG activation when in complex with DPP4. Angiostatin: Interacts with ATP5F1A; the interaction inhibits most of the angiogenic effects of angiostatin.

Its subcellular location is the secreted. It catalyses the reaction Preferential cleavage: Lys-|-Xaa &gt; Arg-|-Xaa, higher selectivity than trypsin. Converts fibrin into soluble products.. With respect to regulation, converted into plasmin by plasminogen activators, both plasminogen and its activator being bound to fibrin. Activated with urokinase and high concentrations of streptokinase. In terms of biological role, plasmin dissolves the fibrin of blood clots and acts as a proteolytic factor in a variety of other processes including embryonic development, tissue remodeling, tumor invasion, and inflammation. In ovulation, weakens the walls of the Graafian follicle. It activates the urokinase-type plasminogen activator, collagenases and several complement zymogens, such as C1, C4 and C5. Cleavage of fibronectin and laminin leads to cell detachment and apoptosis. Also cleaves fibrin, thrombospondin and von Willebrand factor. Its role in tissue remodeling and tumor invasion may be modulated by CSPG4. Binds to cells. The sequence is that of Plasminogen (PLG) from Canis lupus familiaris (Dog).